The chain runs to 61 residues: Large ribosomal subunit protein uL30 (61 aa).

Belongs to the universal ribosomal protein uL30 family. Part of the 50S ribosomal subunit.

This chain is Large ribosomal subunit protein uL30, found in Shewanella piezotolerans (strain WP3 / JCM 13877).